A 117-amino-acid chain; its full sequence is Anti-sigma F factor antagonist (117 aa).

Residues leucine 3–leucine 113 enclose the STAS domain. Residue serine 58 is modified to Phosphoserine.

Belongs to the anti-sigma-factor antagonist family. In terms of processing, phosphorylated by SpoIIAB on a serine residue.

Its function is as follows. In the phosphorylated form it could act as an anti-anti-sigma factor that counteracts SpoIIAB and thus releases sigma f from inhibition. The chain is Anti-sigma F factor antagonist (spoIIAA) from Bacillus subtilis (strain 168).